Reading from the N-terminus, the 192-residue chain is Small ribosomal subunit protein uS4B (192 aa).

Phosphoserine occurs at positions 89 and 179. The S4 RNA-binding domain maps to 107 to 181; the sequence is RRLQTQVFKL…CKRKRLRSQQ (75 aa). The disordered stretch occupies residues 166–192; it reads GGRPGRCKRKRLRSQQEGGEGEEAEEE.

It belongs to the universal ribosomal protein uS4 family. In terms of assembly, component of the small ribosomal subunit (SSU). Mature yeast ribosomes consist of a small (40S) and a large (60S) subunit. The 40S small subunit contains 1 molecule of ribosomal RNA (18S rRNA) and at least 33 different proteins. The large 60S subunit contains 3 rRNA molecules (25S, 5.8S and 5S rRNA) and at least 46 different proteins. Interacts with snoRNA U3. uS11 interacts with MPP10. Component of the ribosomal small subunit (SSU) processome composed of at least 40 protein subunits and snoRNA U3.

The protein localises to the cytoplasm. Its function is as follows. Component of the ribosome, a large ribonucleoprotein complex responsible for the synthesis of proteins in the cell. The small ribosomal subunit (SSU) binds messenger RNAs (mRNAs) and translates the encoded message by selecting cognate aminoacyl-transfer RNA (tRNA) molecules. The large subunit (LSU) contains the ribosomal catalytic site termed the peptidyl transferase center (PTC), which catalyzes the formation of peptide bonds, thereby polymerizing the amino acids delivered by tRNAs into a polypeptide chain. The nascent polypeptides leave the ribosome through a tunnel in the LSU and interact with protein factors that function in enzymatic processing, targeting, and the membrane insertion of nascent chains at the exit of the ribosomal tunnel. uS4 is involved in nucleolar processing of pre-18S ribosomal RNA and ribosome assembly. This chain is Small ribosomal subunit protein uS4B (rps902), found in Schizosaccharomyces pombe (strain 972 / ATCC 24843) (Fission yeast).